A 611-amino-acid chain; its full sequence is Autophagy-related protein 22-2 (611 aa).

Positions methionine 1–threonine 24 are disordered. Residues tyrosine 35 to leucine 55 traverse the membrane as a helical segment. Residue asparagine 78 is glycosylated (N-linked (GlcNAc...) asparagine). Transmembrane regions (helical) follow at residues threonine 116–isoleucine 136, leucine 151–proline 171, and isoleucine 175–leucine 195. The N-linked (GlcNAc...) asparagine glycan is linked to asparagine 221. The next 2 membrane-spanning stretches (helical) occupy residues isoleucine 286–alanine 306 and leucine 316–leucine 336. Residue asparagine 353 is glycosylated (N-linked (GlcNAc...) asparagine). The next 6 helical transmembrane spans lie at isoleucine 380 to threonine 400, alanine 414 to tryptophan 434, isoleucine 449 to proline 469, tryptophan 483 to cysteine 503, alanine 521 to isoleucine 541, and alanine 551 to valine 571.

Belongs to the ATG22 family.

The protein resides in the vacuole membrane. Its function is as follows. Vacuolar effluxer which mediate the efflux of amino acids resulting from autophagic degradation. The release of autophagic amino acids allows the maintenance of protein synthesis and viability during nitrogen starvation. The polypeptide is Autophagy-related protein 22-2 (atg22-2) (Aspergillus clavatus (strain ATCC 1007 / CBS 513.65 / DSM 816 / NCTC 3887 / NRRL 1 / QM 1276 / 107)).